We begin with the raw amino-acid sequence, 434 residues long: Beta-enolase (434 aa).

Ala-2 carries the post-translational modification N-acetylalanine. A Phosphothreonine modification is found at Thr-72. Phosphoserine is present on residues Ser-83 and Ser-157. Substrate contacts are provided by His-158 and Glu-167. Position 176 is a phosphoserine (Ser-176). Thr-205 carries the phosphothreonine modification. Catalysis depends on Glu-210, which acts as the Proton donor. Thr-229 is subject to Phosphothreonine. Tyr-236 carries the post-translational modification Phosphotyrosine. Asp-245 is a binding site for Mg(2+). Ser-263 carries the post-translational modification Phosphoserine. Glu-293 and Asp-318 together coordinate substrate. Mg(2+) contacts are provided by Glu-293 and Asp-318. Catalysis depends on Lys-343, which acts as the Proton acceptor. Substrate contacts are provided by residues 370–373 (SHRS) and Lys-394.

The protein belongs to the enolase family. As to quaternary structure, mammalian enolase is composed of 3 isozyme subunits, alpha, beta and gamma, which can form homodimers or heterodimers which are cell-type and development-specific. Interacts with PNKD. The cofactor is Mg(2+).

It localises to the cytoplasm. It carries out the reaction (2R)-2-phosphoglycerate = phosphoenolpyruvate + H2O. The protein operates within carbohydrate degradation; glycolysis; pyruvate from D-glyceraldehyde 3-phosphate: step 4/5. In terms of biological role, glycolytic enzyme that catalyzes the conversion of 2-phosphoglycerate to phosphoenolpyruvate. Appears to have a function in striated muscle development and regeneration. The chain is Beta-enolase (ENO3) from Sus scrofa (Pig).